A 349-amino-acid polypeptide reads, in one-letter code: Anthranilate phosphoribosyltransferase (349 aa).

5-phospho-alpha-D-ribose 1-diphosphate is bound by residues glycine 82, 85 to 86 (GD), threonine 90, 92 to 95 (NVST), 110 to 118 (KHGNRSVSS), and glycine 122. Glycine 82 is an anthranilate binding site. Residue serine 94 coordinates Mg(2+). Anthranilate is bound at residue asparagine 113. Arginine 168 contacts anthranilate. Residues aspartate 232 and glutamate 233 each contribute to the Mg(2+) site.

Belongs to the anthranilate phosphoribosyltransferase family. In terms of assembly, homodimer. Mg(2+) serves as cofactor.

It catalyses the reaction N-(5-phospho-beta-D-ribosyl)anthranilate + diphosphate = 5-phospho-alpha-D-ribose 1-diphosphate + anthranilate. It functions in the pathway amino-acid biosynthesis; L-tryptophan biosynthesis; L-tryptophan from chorismate: step 2/5. In terms of biological role, catalyzes the transfer of the phosphoribosyl group of 5-phosphorylribose-1-pyrophosphate (PRPP) to anthranilate to yield N-(5'-phosphoribosyl)-anthranilate (PRA). The chain is Anthranilate phosphoribosyltransferase from Methanosphaera stadtmanae (strain ATCC 43021 / DSM 3091 / JCM 11832 / MCB-3).